The primary structure comprises 307 residues: UDP-3-O-acyl-N-acetylglucosamine deacetylase (307 aa).

Zn(2+) is bound by residues histidine 78, histidine 241, and aspartate 245. The active-site Proton donor is histidine 268.

The protein belongs to the LpxC family. Requires Zn(2+) as cofactor.

The enzyme catalyses a UDP-3-O-[(3R)-3-hydroxyacyl]-N-acetyl-alpha-D-glucosamine + H2O = a UDP-3-O-[(3R)-3-hydroxyacyl]-alpha-D-glucosamine + acetate. It participates in glycolipid biosynthesis; lipid IV(A) biosynthesis; lipid IV(A) from (3R)-3-hydroxytetradecanoyl-[acyl-carrier-protein] and UDP-N-acetyl-alpha-D-glucosamine: step 2/6. Functionally, catalyzes the hydrolysis of UDP-3-O-myristoyl-N-acetylglucosamine to form UDP-3-O-myristoylglucosamine and acetate, the committed step in lipid A biosynthesis. The protein is UDP-3-O-acyl-N-acetylglucosamine deacetylase of Delftia acidovorans (strain DSM 14801 / SPH-1).